We begin with the raw amino-acid sequence, 211 residues long: Thiamine-phosphate synthase (211 aa).

4-amino-2-methyl-5-(diphosphooxymethyl)pyrimidine-binding positions include 37 to 41 and Asn-69; that span reads QYRDK. Mg(2+) is bound by residues Asp-70 and Asp-89. Ser-108 serves as a coordination point for 4-amino-2-methyl-5-(diphosphooxymethyl)pyrimidine. 135-137 provides a ligand contact to 2-[(2R,5Z)-2-carboxy-4-methylthiazol-5(2H)-ylidene]ethyl phosphate; that stretch reads SPT. Lys-138 serves as a coordination point for 4-amino-2-methyl-5-(diphosphooxymethyl)pyrimidine. Residues Gly-165 and 185–186 each bind 2-[(2R,5Z)-2-carboxy-4-methylthiazol-5(2H)-ylidene]ethyl phosphate; that span reads LS.

Belongs to the thiamine-phosphate synthase family. Requires Mg(2+) as cofactor.

The enzyme catalyses 2-[(2R,5Z)-2-carboxy-4-methylthiazol-5(2H)-ylidene]ethyl phosphate + 4-amino-2-methyl-5-(diphosphooxymethyl)pyrimidine + 2 H(+) = thiamine phosphate + CO2 + diphosphate. The catalysed reaction is 2-(2-carboxy-4-methylthiazol-5-yl)ethyl phosphate + 4-amino-2-methyl-5-(diphosphooxymethyl)pyrimidine + 2 H(+) = thiamine phosphate + CO2 + diphosphate. It catalyses the reaction 4-methyl-5-(2-phosphooxyethyl)-thiazole + 4-amino-2-methyl-5-(diphosphooxymethyl)pyrimidine + H(+) = thiamine phosphate + diphosphate. The protein operates within cofactor biosynthesis; thiamine diphosphate biosynthesis; thiamine phosphate from 4-amino-2-methyl-5-diphosphomethylpyrimidine and 4-methyl-5-(2-phosphoethyl)-thiazole: step 1/1. Functionally, condenses 4-methyl-5-(beta-hydroxyethyl)thiazole monophosphate (THZ-P) and 2-methyl-4-amino-5-hydroxymethyl pyrimidine pyrophosphate (HMP-PP) to form thiamine monophosphate (TMP). This chain is Thiamine-phosphate synthase, found in Thiobacillus denitrificans (strain ATCC 25259 / T1).